We begin with the raw amino-acid sequence, 345 residues long: Biotin synthase (345 aa).

The Radical SAM core domain occupies 39–266; that stretch reads NEVQVSTLLS…ASHVRLSAGR (228 aa). The [4Fe-4S] cluster site is built by C54, C58, and C61. Positions 98, 129, 189, and 261 each coordinate [2Fe-2S] cluster.

The protein belongs to the radical SAM superfamily. Biotin synthase family. Homodimer. The cofactor is [4Fe-4S] cluster. Requires [2Fe-2S] cluster as cofactor.

The catalysed reaction is (4R,5S)-dethiobiotin + (sulfur carrier)-SH + 2 reduced [2Fe-2S]-[ferredoxin] + 2 S-adenosyl-L-methionine = (sulfur carrier)-H + biotin + 2 5'-deoxyadenosine + 2 L-methionine + 2 oxidized [2Fe-2S]-[ferredoxin]. It participates in cofactor biosynthesis; biotin biosynthesis; biotin from 7,8-diaminononanoate: step 2/2. Functionally, catalyzes the conversion of dethiobiotin (DTB) to biotin by the insertion of a sulfur atom into dethiobiotin via a radical-based mechanism. This is Biotin synthase from Idiomarina loihiensis (strain ATCC BAA-735 / DSM 15497 / L2-TR).